The chain runs to 365 residues: Flagellar P-ring protein (365 aa).

Positions 1-19 are cleaved as a signal peptide; the sequence is MIKFLSALILLLVTTAAQA.

It belongs to the FlgI family. The basal body constitutes a major portion of the flagellar organelle and consists of four rings (L,P,S, and M) mounted on a central rod.

It localises to the periplasm. The protein localises to the bacterial flagellum basal body. In terms of biological role, assembles around the rod to form the L-ring and probably protects the motor/basal body from shearing forces during rotation. In Shigella boydii serotype 4 (strain Sb227), this protein is Flagellar P-ring protein.